An 823-amino-acid chain; its full sequence is DNA ligase (823 aa).

NAD(+)-binding positions include 32–36 (DAEYD), 81–82 (SL), and E121. The N6-AMP-lysine intermediate role is filled by K123. Residues R144, E181, K299, and K323 each coordinate NAD(+). Residues C449, C452, C467, and C473 each coordinate Zn(2+). The segment at 528-558 (ETADKGSSENENGDAETVSGDLSKYNTQNGK) is disordered. Positions 746–823 (GINKAVAGKT…SEAELLTLLC (78 aa)) constitute a BRCT domain.

Belongs to the NAD-dependent DNA ligase family. LigA subfamily. The cofactor is Mg(2+). Requires Mn(2+) as cofactor.

It catalyses the reaction NAD(+) + (deoxyribonucleotide)n-3'-hydroxyl + 5'-phospho-(deoxyribonucleotide)m = (deoxyribonucleotide)n+m + AMP + beta-nicotinamide D-nucleotide.. DNA ligase that catalyzes the formation of phosphodiester linkages between 5'-phosphoryl and 3'-hydroxyl groups in double-stranded DNA using NAD as a coenzyme and as the energy source for the reaction. It is essential for DNA replication and repair of damaged DNA. This Neisseria gonorrhoeae (strain NCCP11945) protein is DNA ligase.